A 506-amino-acid polypeptide reads, in one-letter code: NAD(P)H-quinone oxidoreductase subunit 2 (506 aa).

Transmembrane regions (helical) follow at residues A14–A34, W42–W62, L79–W99, P108–G128, L132–Y152, L167–L187, F206–V226, P240–I260, L276–Q296, M302–T322, V330–F350, L374–G394, and L409–I429.

The protein belongs to the complex I subunit 2 family. In terms of assembly, NDH-1 can be composed of about 15 different subunits; different subcomplexes with different compositions have been identified which probably have different functions.

The protein resides in the cellular thylakoid membrane. The enzyme catalyses a plastoquinone + NADH + (n+1) H(+)(in) = a plastoquinol + NAD(+) + n H(+)(out). It carries out the reaction a plastoquinone + NADPH + (n+1) H(+)(in) = a plastoquinol + NADP(+) + n H(+)(out). Functionally, NDH-1 shuttles electrons from an unknown electron donor, via FMN and iron-sulfur (Fe-S) centers, to quinones in the respiratory and/or the photosynthetic chain. The immediate electron acceptor for the enzyme in this species is believed to be plastoquinone. Couples the redox reaction to proton translocation, and thus conserves the redox energy in a proton gradient. Cyanobacterial NDH-1 also plays a role in inorganic carbon-concentration. This is NAD(P)H-quinone oxidoreductase subunit 2 from Prochlorococcus marinus (strain MIT 9312).